The sequence spans 161 residues: Regulator of ribonuclease activity A (161 aa).

Belongs to the RraA family. In terms of assembly, homotrimer. Binds to both RNA-binding sites in the C-terminal region of Rne and to RhlB.

Its subcellular location is the cytoplasm. Globally modulates RNA abundance by binding to RNase E (Rne) and regulating its endonucleolytic activity. Can modulate Rne action in a substrate-dependent manner by altering the composition of the degradosome. Modulates RNA-binding and helicase activities of the degradosome. This chain is Regulator of ribonuclease activity A, found in Tolumonas auensis (strain DSM 9187 / NBRC 110442 / TA 4).